The chain runs to 221 residues: Transmembrane protein 267 (221 aa).

Helical transmembrane passes span 28–48 (ASAGLGAFCFVADHFLTLPFI), 57–77 (LFDNTVHAIIGLWSWAIVIGL), 86–106 (VILAGFLASVIDLDHFYMAGS), 121–141 (LHCSTLIPALCFSLRLLMWAC), and 182–204 (ISYWLYVTITATLPHLCSVLMYL).

Its subcellular location is the membrane. This chain is Transmembrane protein 267 (tmem267), found in Danio rerio (Zebrafish).